The following is a 346-amino-acid chain: Inositol 2-dehydrogenase/D-chiro-inositol 3-dehydrogenase (346 aa).

Belongs to the Gfo/Idh/MocA family. In terms of assembly, homotetramer.

The catalysed reaction is myo-inositol + NAD(+) = scyllo-inosose + NADH + H(+). It carries out the reaction 1D-chiro-inositol + NAD(+) = scyllo-inosine + NADH + H(+). It functions in the pathway polyol metabolism; myo-inositol degradation into acetyl-CoA; acetyl-CoA from myo-inositol: step 1/7. Involved in the oxidation of myo-inositol (MI) and D-chiro-inositol (DCI) to 2-keto-myo-inositol (2KMI or 2-inosose) and 1-keto-D-chiro-inositol (1KDCI), respectively. This is Inositol 2-dehydrogenase/D-chiro-inositol 3-dehydrogenase from Lacticaseibacillus casei (Lactobacillus casei).